The primary structure comprises 104 residues: Large ribosomal subunit protein uL23 (104 aa).

The protein belongs to the universal ribosomal protein uL23 family. Part of the 50S ribosomal subunit. Contacts protein L29, and trigger factor when it is bound to the ribosome.

Functionally, one of the early assembly proteins it binds 23S rRNA. One of the proteins that surrounds the polypeptide exit tunnel on the outside of the ribosome. Forms the main docking site for trigger factor binding to the ribosome. The sequence is that of Large ribosomal subunit protein uL23 from Ralstonia nicotianae (strain ATCC BAA-1114 / GMI1000) (Ralstonia solanacearum).